The sequence spans 341 residues: Phosphate acyltransferase (341 aa).

It belongs to the PlsX family. Homodimer. Probably interacts with PlsY.

The protein localises to the cytoplasm. It catalyses the reaction a fatty acyl-[ACP] + phosphate = an acyl phosphate + holo-[ACP]. It functions in the pathway lipid metabolism; phospholipid metabolism. Catalyzes the reversible formation of acyl-phosphate (acyl-PO(4)) from acyl-[acyl-carrier-protein] (acyl-ACP). This enzyme utilizes acyl-ACP as fatty acyl donor, but not acyl-CoA. The chain is Phosphate acyltransferase from Ehrlichia ruminantium (strain Gardel).